Reading from the N-terminus, the 154-residue chain is Lymphocyte antigen 6K (154 aa).

Positions 1–20 (MAFLVALLVVLGLQLVQSNA) are cleaved as a signal peptide. The region spanning 21-117 (LTCHVCEAQN…NGEGPPTDQL (97 aa)) is the UPAR/Ly6 domain. Glycine 123 is lipidated: GPI-anchor amidated glycine. Positions 124-154 (KASGRRHRYIELLLTGFMVLTANGLSALCLL) are cleaved as a propeptide — removed in mature form.

In terms of assembly, interacts with ADAM3 and TEX101. Strongly expressed in testes and weakly expressed in the epididymis, ovary, and uterus. Expressed in testicular germ cells (TGCs). Expressed in the testicular seminiferous tubules, in spermatocytes, spermatids, and testicular spermatozoa.

Its subcellular location is the secreted. The protein localises to the cytoplasm. It localises to the cell membrane. The protein resides in the cytoplasmic vesicle. It is found in the secretory vesicle. Its subcellular location is the acrosome. The protein localises to the membrane raft. Functionally, required for sperm migration into the oviduct and male fertility by controlling binding of sperm to zona pellucida. May play a role in cell growth. The chain is Lymphocyte antigen 6K from Mus musculus (Mouse).